The following is a 93-amino-acid chain: MPRSLKKGPFVDMHLLKKVRAGNESKDRNMIKTWSRRSMIIPEMLGHTIAVHDGRRHIPVFITESMVGHKLGEFAPTRTYRGHVKDDRKARRR.

The protein belongs to the universal ribosomal protein uS19 family.

Functionally, protein S19 forms a complex with S13 that binds strongly to the 16S ribosomal RNA. The polypeptide is Small ribosomal subunit protein uS19 (Tropheryma whipplei (strain TW08/27) (Whipple's bacillus)).